Here is a 284-residue protein sequence, read N- to C-terminus: Extracellular metalloprotease VDBG_01143 (284 aa).

The signal sequence occupies residues 1–18 (MLFKSLFVAAATAVGVSG). N-linked (GlcNAc...) asparagine glycosylation occurs at N58. H200 lines the Zn(2+) pocket. E201 is a catalytic residue. Residue H204 participates in Zn(2+) binding. The cysteines at positions 236 and 263 are disulfide-linked.

Belongs to the peptidase M43B family.

It is found in the secreted. Its function is as follows. Secreted metalloproteinase that allows assimilation of proteinaceous substrates. This Verticillium alfalfae (strain VaMs.102 / ATCC MYA-4576 / FGSC 10136) (Verticillium wilt of alfalfa) protein is Extracellular metalloprotease VDBG_01143.